Consider the following 619-residue polypeptide: MSKIIGIDLGTTNSCVAVMEGGEPVVITNSEGARTTPSVVSFQANGERLVGQVAKRQAITNPEKTIMSIKRHMGTDYKVNIDGKDYTPQEISAMILQKLKADAEAYLGEKVTEAVITVPAYFNDAERQATKDAGRIAGLDVKRIINEPTAASLAYGLDKMDSAHKILVYDLGGGTFDVSILDLGDGVFEVVSTNGDARLGGDDFDQRIIDYIAEDFKAQNGIDLRQDKMALQRLKEAAEKAKIELSSSTQTLINLPFITADATGPKHIDMTLTRAKFNELTHDLVERTIDIMKEALKSGNVSLNDIDKVILVGGSTRIPAVQEAVKNFTGKEPSKGVNPDECVAMGAAIQAGVLTGDVKDVLLLDVTPLTLGIETLGGVATPLIERNTTIPARKSQIFSTAADNQTSVEIHVVQGERQMAADNKTLGRFTLSGIAPAPRGIPQIEVAFDIDANGIVKVSATDKATGKEANITITASTNLSDAEIDKAVKEAEQFAEEDKKRKEAIEVKNNAEQIVYQTEKTLNELGDKVSAEEKSEIEAKIEEVKKVKDGDDIEAIKKAMEDLTQAFYKISEKLYQQNGGAQGEGFDPNNMGGANAGTGAANSNDDNVVDADFEVQDDK.

Thr-175 carries the phosphothreonine; by autocatalysis modification. Residues 578–619 form a disordered region; the sequence is NGGAQGEGFDPNNMGGANAGTGAANSNDDNVVDADFEVQDDK. The segment covering 589–606 has biased composition (low complexity); the sequence is NNMGGANAGTGAANSNDD. The span at 607 to 619 shows a compositional bias: acidic residues; that stretch reads NVVDADFEVQDDK.

The protein belongs to the heat shock protein 70 family.

Its function is as follows. Acts as a chaperone. The sequence is that of Chaperone protein DnaK from Clostridium perfringens (strain SM101 / Type A).